The sequence spans 325 residues: Fructose-1,6-bisphosphatase class 1 (325 aa).

The Mg(2+) site is built by Glu-84, Asp-103, Leu-105, and Asp-106. Substrate-binding positions include 106–109 (DGSS), Asn-196, and Lys-262. Glu-268 is a Mg(2+) binding site.

Belongs to the FBPase class 1 family. Homotetramer. The cofactor is Mg(2+).

The protein resides in the cytoplasm. It carries out the reaction beta-D-fructose 1,6-bisphosphate + H2O = beta-D-fructose 6-phosphate + phosphate. The protein operates within carbohydrate biosynthesis; gluconeogenesis. The sequence is that of Fructose-1,6-bisphosphatase class 1 from Shewanella oneidensis (strain ATCC 700550 / JCM 31522 / CIP 106686 / LMG 19005 / NCIMB 14063 / MR-1).